Reading from the N-terminus, the 542-residue chain is Chaperonin GroEL (542 aa).

ATP contacts are provided by residues Thr-29–Pro-32, Lys-50, Asp-86–Thr-90, Gly-413, Asn-477–Ala-479, and Asp-493.

The protein belongs to the chaperonin (HSP60) family. In terms of assembly, forms a cylinder of 14 subunits composed of two heptameric rings stacked back-to-back. Interacts with the co-chaperonin GroES.

The protein localises to the cytoplasm. The catalysed reaction is ATP + H2O + a folded polypeptide = ADP + phosphate + an unfolded polypeptide.. Functionally, together with its co-chaperonin GroES, plays an essential role in assisting protein folding. The GroEL-GroES system forms a nano-cage that allows encapsulation of the non-native substrate proteins and provides a physical environment optimized to promote and accelerate protein folding. The polypeptide is Chaperonin GroEL (Solibacter usitatus (strain Ellin6076)).